The sequence spans 100 residues: Large ribosomal subunit protein bL28 (100 aa).

The tract at residues 1-25 (MTRRCDITGKSVLSGNNVSHANNKS) is disordered. A compositionally biased stretch (polar residues) spans 11 to 22 (SVLSGNNVSHAN).

This sequence belongs to the bacterial ribosomal protein bL28 family.

This Acidiphilium cryptum (strain JF-5) protein is Large ribosomal subunit protein bL28.